Reading from the N-terminus, the 335-residue chain is N-acetyl-gamma-glutamyl-phosphate reductase (335 aa).

Cys-147 is an active-site residue.

Belongs to the NAGSA dehydrogenase family. Type 1 subfamily.

The protein localises to the cytoplasm. It catalyses the reaction N-acetyl-L-glutamate 5-semialdehyde + phosphate + NADP(+) = N-acetyl-L-glutamyl 5-phosphate + NADPH + H(+). It participates in amino-acid biosynthesis; L-arginine biosynthesis; N(2)-acetyl-L-ornithine from L-glutamate: step 3/4. Catalyzes the NADPH-dependent reduction of N-acetyl-5-glutamyl phosphate to yield N-acetyl-L-glutamate 5-semialdehyde. The polypeptide is N-acetyl-gamma-glutamyl-phosphate reductase (Sulfurovum sp. (strain NBC37-1)).